We begin with the raw amino-acid sequence, 304 residues long: Pseudouridine-5'-phosphate glycosidase (304 aa).

Catalysis depends on glutamate 25, which acts as the Proton donor. Substrate contacts are provided by lysine 86 and valine 106. Aspartate 138 serves as a coordination point for Mn(2+). Residue 140–142 coordinates substrate; the sequence is SAD. Residue lysine 159 is the Nucleophile of the active site.

This sequence belongs to the pseudouridine-5'-phosphate glycosidase family. Homotrimer. Mn(2+) serves as cofactor.

It carries out the reaction D-ribose 5-phosphate + uracil = psi-UMP + H2O. Catalyzes the reversible cleavage of pseudouridine 5'-phosphate (PsiMP) to ribose 5-phosphate and uracil. Functions biologically in the cleavage direction, as part of a pseudouridine degradation pathway. This Lysinibacillus sphaericus (strain C3-41) protein is Pseudouridine-5'-phosphate glycosidase.